The primary structure comprises 155 residues: Small ribosomal subunit protein uS7cz/uS7cy (155 aa).

The protein belongs to the universal ribosomal protein uS7 family. Part of the 30S ribosomal subunit.

It localises to the plastid. It is found in the chloroplast. Its function is as follows. One of the primary rRNA binding proteins, it binds directly to 16S rRNA where it nucleates assembly of the head domain of the 30S subunit. This is Small ribosomal subunit protein uS7cz/uS7cy (rps7-A) from Chloranthus spicatus (Chulantree).